The chain runs to 149 residues: Endoribonuclease YbeY (149 aa).

The Zn(2+) site is built by H101, H105, and H111.

It belongs to the endoribonuclease YbeY family. It depends on Zn(2+) as a cofactor.

It localises to the cytoplasm. Functionally, single strand-specific metallo-endoribonuclease involved in late-stage 70S ribosome quality control and in maturation of the 3' terminus of the 16S rRNA. This Thermotoga neapolitana (strain ATCC 49049 / DSM 4359 / NBRC 107923 / NS-E) protein is Endoribonuclease YbeY.